We begin with the raw amino-acid sequence, 193 residues long: Orotate phosphoribosyltransferase (193 aa).

5-phospho-alpha-D-ribose 1-diphosphate-binding positions include R102, K103, K106, H108, and 129–137; that span reads EDVVTTGGS. Orotate-binding residues include T133 and R161.

Belongs to the purine/pyrimidine phosphoribosyltransferase family. PyrE subfamily. Homodimer. Requires Mg(2+) as cofactor.

It carries out the reaction orotidine 5'-phosphate + diphosphate = orotate + 5-phospho-alpha-D-ribose 1-diphosphate. Its pathway is pyrimidine metabolism; UMP biosynthesis via de novo pathway; UMP from orotate: step 1/2. Functionally, catalyzes the transfer of a ribosyl phosphate group from 5-phosphoribose 1-diphosphate to orotate, leading to the formation of orotidine monophosphate (OMP). The sequence is that of Orotate phosphoribosyltransferase from Prochlorococcus marinus (strain NATL1A).